The sequence spans 541 residues: Glucose-6-phosphate isomerase (541 aa).

E353 serves as the catalytic Proton donor. Residues H384 and K504 contribute to the active site.

Belongs to the GPI family.

It is found in the cytoplasm. The catalysed reaction is alpha-D-glucose 6-phosphate = beta-D-fructose 6-phosphate. It functions in the pathway carbohydrate biosynthesis; gluconeogenesis. Its pathway is carbohydrate degradation; glycolysis; D-glyceraldehyde 3-phosphate and glycerone phosphate from D-glucose: step 2/4. Catalyzes the reversible isomerization of glucose-6-phosphate to fructose-6-phosphate. The sequence is that of Glucose-6-phosphate isomerase from Deinococcus radiodurans (strain ATCC 13939 / DSM 20539 / JCM 16871 / CCUG 27074 / LMG 4051 / NBRC 15346 / NCIMB 9279 / VKM B-1422 / R1).